We begin with the raw amino-acid sequence, 437 residues long: Enolase (437 aa).

Gln162 is a binding site for (2R)-2-phosphoglycerate. The Proton donor role is filled by Glu204. 3 residues coordinate Mg(2+): Asp251, Glu297, and Asp324. 4 residues coordinate (2R)-2-phosphoglycerate: Lys349, Arg378, Ser379, and Lys400. Lys349 acts as the Proton acceptor in catalysis.

The protein belongs to the enolase family. Mg(2+) is required as a cofactor.

The protein localises to the cytoplasm. Its subcellular location is the secreted. It is found in the cell surface. It carries out the reaction (2R)-2-phosphoglycerate = phosphoenolpyruvate + H2O. It participates in carbohydrate degradation; glycolysis; pyruvate from D-glyceraldehyde 3-phosphate: step 4/5. In terms of biological role, catalyzes the reversible conversion of 2-phosphoglycerate (2-PG) into phosphoenolpyruvate (PEP). It is essential for the degradation of carbohydrates via glycolysis. The chain is Enolase from Chlorobaculum parvum (strain DSM 263 / NCIMB 8327) (Chlorobium vibrioforme subsp. thiosulfatophilum).